Here is a 161-residue protein sequence, read N- to C-terminus: Nucleotide-binding protein Shew_2893 (161 aa).

Belongs to the YajQ family.

In terms of biological role, nucleotide-binding protein. The protein is Nucleotide-binding protein Shew_2893 of Shewanella loihica (strain ATCC BAA-1088 / PV-4).